The primary structure comprises 449 residues: Neurexin-1a-beta (449 aa).

An N-terminal signal peptide occupies residues 1–38 (MLRLWPGGAPGGLASILLRISLRLALWLPPLTLGSALA). The Extracellular segment spans residues 39 to 373 (EGPGELYVPQ…EVIRESSSTT (335 aa)). Positions 71-272 (TTYIFGRDGG…DPNVRVEGSA (202 aa)) constitute a Laminin G-like domain. Positions 276-366 (GDMPSSSITP…AKGYPSPEVI (91 aa)) are disordered. Residues 280–311 (SSSITPQSSVSAAGNRSETSPSITDITTTTAS) show a composition bias toward low complexity. Polar residues predominate over residues 312 to 322 (NRQGKQTTTPQ). The chain crosses the membrane as a helical span at residues 374–394 (GMVVGIVAAAALCILILLYAM). Over 395–449 (YKYRNRDEGSYHVDESRNYISNSATQPNGAAVKEKPIGVPKNKKDKKNKDKEYYV) the chain is Cytoplasmic. The tract at residues 415–449 (SNSATQPNGAAVKEKPIGVPKNKKDKKNKDKEYYV) is disordered.

Belongs to the neurexin family.

The protein resides in the membrane. Functionally, neuronal cell surface protein that may be involved in cell recognition and cell adhesion. May play a role in formation or maintenance of synaptic junctions. This chain is Neurexin-1a-beta (nrxn1a), found in Danio rerio (Zebrafish).